We begin with the raw amino-acid sequence, 271 residues long: Calretinin (271 aa).

6 consecutive EF-hand domains span residues 16–51, 63–98, 107–142, 151–186, 195–230, and 235–270; these read LTAS…LEKA, NFGE…EENF, GSSA…LLKK, KLQE…QENF, LTSE…LYEK, and MNIQ…SEPP. Ca(2+) is bound by residues Asp29, Asp31, Asn33, Tyr35, Glu40, Asp76, Asn78, Asp80, Lys82, Glu87, Asp120, Asp122, Ser124, Tyr126, Glu131, Asp164, Asn166, Asp168, Lys170, Glu175, Asp208, Asp210, Ser212, Tyr214, and Glu219. Phosphotyrosine is present on Tyr214.

It belongs to the calbindin family.

Its subcellular location is the synapse. It localises to the cell projection. The protein resides in the dendrite. In terms of biological role, calcium-binding protein involved in calcium homeostasis and signal transduction. It plays a critical role in buffering intracellular calcium levels and modulating calcium-dependent signaling pathways. Predominantly expressed in specific neuronal populations, influences synaptic plasticity and neuronal excitability, contributing to learning and memory. During embryonic development, it facilitates neuronal differentiation and maturation. The chain is Calretinin (Calb2) from Rattus norvegicus (Rat).